The chain runs to 223 residues: MLPNGLIVSCQALPDEPLHSSFIMSKMALAAYQGGAVGIRANTKEDILAIREEVSLPVIGIVKRDYEGSNVFITATSKEVDELIESGCEVIALDATTQTRPKESLEELVHYIREKAPHVEIMADISTVEEAINADHLNFDYIGTTLRGYTSYTKGHILFENDFEFLKEVLEKVNAKVIAEGNVITPEMYKKVSDLGVHCTVVGGAITRPKQITERFIEAVQQK.

Belongs to the NanE family.

The enzyme catalyses an N-acyl-D-glucosamine 6-phosphate = an N-acyl-D-mannosamine 6-phosphate. It participates in amino-sugar metabolism; N-acetylneuraminate degradation; D-fructose 6-phosphate from N-acetylneuraminate: step 3/5. Functionally, converts N-acetylmannosamine-6-phosphate (ManNAc-6-P) to N-acetylglucosamine-6-phosphate (GlcNAc-6-P). The chain is Putative N-acetylmannosamine-6-phosphate 2-epimerase from Staphylococcus haemolyticus (strain JCSC1435).